Consider the following 1501-residue polypeptide: Ribulose bisphosphate carboxylase (1501 aa).

Asparagine 111 contacts substrate. Lysine 166 acts as the Proton acceptor in catalysis. Position 168 (lysine 168) interacts with substrate. Residues lysine 191, aspartate 193, and glutamate 194 each coordinate Mg(2+). At lysine 191 the chain carries N6-carboxylysine. Histidine 287 (proton acceptor) is an active-site residue. The substrate site is built by arginine 288, histidine 321, and serine 368. The propeptide at 486–508 is linker; it reads SAAAFVGASVAPAKKENVVARQA. Residue asparagine 619 coordinates substrate. Lysine 674 acts as the Proton acceptor in catalysis. Lysine 676 serves as a coordination point for substrate. Lysine 699, aspartate 701, and glutamate 702 together coordinate Mg(2+). Residue lysine 699 is modified to N6-carboxylysine. Histidine 795 functions as the Proton acceptor in the catalytic mechanism. Substrate is bound by residues arginine 796, histidine 829, and serine 876. The propeptide at 994–1016 is linker; that stretch reads SAAAFVGASVAPAKKENVVARQA. A substrate-binding site is contributed by asparagine 1127. The Proton acceptor role is filled by lysine 1182. Substrate is bound at residue lysine 1184. Positions 1207, 1209, and 1210 each coordinate Mg(2+). Lysine 1207 is modified (N6-carboxylysine). Residue histidine 1303 is the Proton acceptor of the active site. Substrate-binding residues include arginine 1304, histidine 1337, and serine 1384.

It belongs to the RuBisCO large chain family. Type II subfamily. As to quaternary structure, homodimer. Mg(2+) is required as a cofactor.

The protein resides in the plastid. It is found in the chloroplast. The enzyme catalyses 2 (2R)-3-phosphoglycerate + 2 H(+) = D-ribulose 1,5-bisphosphate + CO2 + H2O. It carries out the reaction D-ribulose 1,5-bisphosphate + O2 = 2-phosphoglycolate + (2R)-3-phosphoglycerate + 2 H(+). Its function is as follows. RuBisCO catalyzes two reactions: the carboxylation of D-ribulose 1,5-bisphosphate, the primary event in carbon dioxide fixation, as well as the oxidative fragmentation of the pentose substrate. Both reactions occur simultaneously and in competition at the same active site. The polypeptide is Ribulose bisphosphate carboxylase (rbcL) (Symbiodinium sp. (Dinoflagellate)).